We begin with the raw amino-acid sequence, 231 residues long: tRNA (guanine-N(1)-)-methyltransferase (231 aa).

S-adenosyl-L-methionine-binding positions include glycine 114 and 134–139; that span reads IGDYVL.

It belongs to the RNA methyltransferase TrmD family. Homodimer.

It localises to the cytoplasm. It carries out the reaction guanosine(37) in tRNA + S-adenosyl-L-methionine = N(1)-methylguanosine(37) in tRNA + S-adenosyl-L-homocysteine + H(+). In terms of biological role, specifically methylates guanosine-37 in various tRNAs. This Clostridioides difficile (strain 630) (Peptoclostridium difficile) protein is tRNA (guanine-N(1)-)-methyltransferase.